Here is a 264-residue protein sequence, read N- to C-terminus: Transmembrane protein 270 (264 aa).

3 helical membrane passes run 31–51, 74–94, and 133–153; these read HLYR…LGLA, LSLA…LLLW, and LFLS…LLTW. A compositionally biased stretch (polar residues) spans 227–236; that stretch reads AQEVKSQETS. The tract at residues 227-264 is disordered; sequence AQEVKSQETSGPPPQFLIPESSTTESGPLPPQPETPGE. Positions 254–264 are enriched in pro residues; sequence PLPPQPETPGE.

In terms of tissue distribution, testis.

The protein resides in the membrane. In Mus musculus (Mouse), this protein is Transmembrane protein 270.